Here is a 395-residue protein sequence, read N- to C-terminus: Imidazolonepropionase (395 aa).

His72 and His74 together coordinate Fe(3+). His72 and His74 together coordinate Zn(2+). Residues Arg81, Tyr144, and His174 each contribute to the 4-imidazolone-5-propanoate site. Residue Tyr144 participates in N-formimidoyl-L-glutamate binding. His231 contacts Fe(3+). His231 contacts Zn(2+). Glu234 contributes to the 4-imidazolone-5-propanoate binding site. A Fe(3+)-binding site is contributed by Asp306. Zn(2+) is bound at residue Asp306.

This sequence belongs to the metallo-dependent hydrolases superfamily. HutI family. Requires Zn(2+) as cofactor. It depends on Fe(3+) as a cofactor.

It localises to the cytoplasm. It carries out the reaction 4-imidazolone-5-propanoate + H2O = N-formimidoyl-L-glutamate. It functions in the pathway amino-acid degradation; L-histidine degradation into L-glutamate; N-formimidoyl-L-glutamate from L-histidine: step 3/3. Catalyzes the hydrolytic cleavage of the carbon-nitrogen bond in imidazolone-5-propanoate to yield N-formimidoyl-L-glutamate. It is the third step in the universal histidine degradation pathway. This Pyrobaculum arsenaticum (strain DSM 13514 / JCM 11321 / PZ6) protein is Imidazolonepropionase.